We begin with the raw amino-acid sequence, 155 residues long: Small ribosomal subunit protein uS7 (155 aa).

This sequence belongs to the universal ribosomal protein uS7 family. As to quaternary structure, part of the 30S ribosomal subunit. Contacts proteins S9 and S11.

In terms of biological role, one of the primary rRNA binding proteins, it binds directly to 16S rRNA where it nucleates assembly of the head domain of the 30S subunit. Is located at the subunit interface close to the decoding center, probably blocks exit of the E-site tRNA. In Mycoplasma mycoides subsp. mycoides SC (strain CCUG 32753 / NCTC 10114 / PG1), this protein is Small ribosomal subunit protein uS7.